A 287-amino-acid polypeptide reads, in one-letter code: MPYKVPEIYYRFEPQTFYITSPARASNLQLINHNNILVKAGQVTIVSTGIIFPKETSFAFILYGKSAKSIFCHTGLIDPGFQGELKLIVLNKTEDDITLFENDLRVSVTAFVYGVPKLHDYSDLCPPRYSKDAGFDLYLPTDVTVKPRVPNRYSVNICCPAQLKSYKPVLFGRSGLAAKGLTIKVSRWQNQLQIIFYNYTKSQITYTARTRIAQVVFMHKKHLPTTLTRLKPTMHLSENIKYSWARVSFQDIKTFPVQDEKLYSSSKDTSDSQMSRGDAGLGSSGLM.

173–175 (RSG) lines the substrate pocket. Positions 264–275 (SSSKDTSDSQMS) are enriched in low complexity. The segment at 264–287 (SSSKDTSDSQMSRGDAGLGSSGLM) is disordered.

This sequence belongs to the dUTPase family. It depends on Mg(2+) as a cofactor.

The catalysed reaction is dUTP + H2O = dUMP + diphosphate + H(+). In terms of biological role, involved in nucleotide metabolism: produces dUMP, the immediate precursor of thymidine nucleotides and decreases the intracellular concentration of dUTP to avoid uracil incorporation into viral DNA. This Saimiriine herpesvirus 2 (strain 11) (SaHV-2) protein is Deoxyuridine 5'-triphosphate nucleotidohydrolase.